We begin with the raw amino-acid sequence, 127 residues long: MLQLLLAVFIGGGTGSVARWLLSMRFNPLHQAIPLGTLAANLIGAFIIGMGFAWFSRMTNIDPVWKVLITTGFCGGLTTFSTFSAEVVFLLQEGRFGWALLNVFVNLLGSFAMTALAFWLFSASTVH.

4 consecutive transmembrane segments (helical) span residues 4–24 (LLLAVFIGGGTGSVARWLLSM), 35–55 (LGTLAANLIGAFIIGMGFAWF), 71–91 (TGFCGGLTTFSTFSAEVVFLL), and 103–123 (VFVNLLGSFAMTALAFWLFSA). Na(+)-binding residues include glycine 75 and threonine 78.

The protein belongs to the fluoride channel Fluc/FEX (TC 1.A.43) family.

The protein resides in the cell inner membrane. The enzyme catalyses fluoride(in) = fluoride(out). Its activity is regulated as follows. Na(+) is not transported, but it plays an essential structural role and its presence is essential for fluoride channel function. Fluoride-specific ion channel. Important for reducing fluoride concentration in the cell, thus reducing its toxicity. This Shigella flexneri serotype 5b (strain 8401) protein is Fluoride-specific ion channel FluC.